The following is a 156-amino-acid chain: Putative pre-16S rRNA nuclease (156 aa).

This sequence belongs to the YqgF nuclease family.

The protein localises to the cytoplasm. In terms of biological role, could be a nuclease involved in processing of the 5'-end of pre-16S rRNA. This Caulobacter vibrioides (strain ATCC 19089 / CIP 103742 / CB 15) (Caulobacter crescentus) protein is Putative pre-16S rRNA nuclease.